The primary structure comprises 78 residues: Large ribosomal subunit protein bL28 (78 aa).

This sequence belongs to the bacterial ribosomal protein bL28 family.

The protein is Large ribosomal subunit protein bL28 of Gloeothece citriformis (strain PCC 7424) (Cyanothece sp. (strain PCC 7424)).